A 137-amino-acid chain; its full sequence is Probable leaf thionin (137 aa).

The signal sequence occupies residues 1–28 (MATNKSIKSVVICVLILGLVLEQVQVEG). 4 disulfide bridges follow: cysteine 31–cysteine 68, cysteine 32–cysteine 60, cysteine 40–cysteine 58, and cysteine 44–cysteine 54. The propeptide at 75–137 (LNLLPESGEP…DGDVIQSVEA (63 aa)) is acidic domain.

Belongs to the plant thionin (TC 1.C.44) family. 4 C-C subfamily.

It localises to the secreted. Its function is as follows. Thionins are small plant proteins which are toxic to animal cells. They seem to exert their toxic effect at the level of the cell membrane. Their precise function is not known. The sequence is that of Probable leaf thionin from Hordeum vulgare (Barley).